The sequence spans 169 residues: Probable glutathione peroxidase 2 (169 aa).

Cys-41 is a catalytic residue.

The protein belongs to the glutathione peroxidase family. In terms of assembly, interacts with DJ1A. In terms of tissue distribution, expressed in leaves, stems, flowers, green siliques and roots.

The protein localises to the cytoplasm. It is found in the cytosol. It localises to the nucleus. It catalyses the reaction 2 glutathione + H2O2 = glutathione disulfide + 2 H2O. Functionally, may constitute a glutathione peroxidase-like protective system against oxidative stresses. This is Probable glutathione peroxidase 2 (GPX2) from Arabidopsis thaliana (Mouse-ear cress).